The following is a 460-amino-acid chain: Cysteine--tRNA ligase (460 aa).

C28 contacts Zn(2+). Positions 30-40 match the 'HIGH' region motif; that stretch reads MTVYDYCHLGH. Zn(2+)-binding residues include C209, H234, and E238. The 'KMSKS' region signature appears at 266–270; sequence KMSKS. K269 contacts ATP.

The protein belongs to the class-I aminoacyl-tRNA synthetase family. In terms of assembly, monomer. The cofactor is Zn(2+).

The protein localises to the cytoplasm. It carries out the reaction tRNA(Cys) + L-cysteine + ATP = L-cysteinyl-tRNA(Cys) + AMP + diphosphate. The sequence is that of Cysteine--tRNA ligase from Pseudomonas syringae pv. syringae (strain B728a).